The primary structure comprises 438 residues: UPF0229 protein Smed_1028 (438 aa).

The segment at 55-107 is disordered; it reads PARGVNEPAFQPDSNSGERRHVLPGNREFAAGDRIPKRGGGGGAGNAGAGTGQ. The span at 92–105 shows a compositional bias: gly residues; the sequence is RGGGGGAGNAGAGT.

It belongs to the UPF0229 family.

This Sinorhizobium medicae (strain WSM419) (Ensifer medicae) protein is UPF0229 protein Smed_1028.